The sequence spans 687 residues: DNA ligase (687 aa).

Residues 34–38 (DAEYD), 83–84 (SL), and Glu117 each bind NAD(+). Lys119 acts as the N6-AMP-lysine intermediate in catalysis. 4 residues coordinate NAD(+): Arg140, Glu182, Lys298, and Lys322. Positions 416, 419, 434, and 439 each coordinate Zn(2+). Positions 609–687 (EARGPFAGKT…EEEFVRLLKE (79 aa)) constitute a BRCT domain.

It belongs to the NAD-dependent DNA ligase family. LigA subfamily. The cofactor is Mg(2+). Mn(2+) serves as cofactor.

It carries out the reaction NAD(+) + (deoxyribonucleotide)n-3'-hydroxyl + 5'-phospho-(deoxyribonucleotide)m = (deoxyribonucleotide)n+m + AMP + beta-nicotinamide D-nucleotide.. DNA ligase that catalyzes the formation of phosphodiester linkages between 5'-phosphoryl and 3'-hydroxyl groups in double-stranded DNA using NAD as a coenzyme and as the energy source for the reaction. It is essential for DNA replication and repair of damaged DNA. This chain is DNA ligase, found in Anaeromyxobacter dehalogenans (strain 2CP-C).